The primary structure comprises 184 residues: MDTQKIEAAVKMIIEAVGENVNREGLQETPARVARMYQEIFSGLGQTAEEHLSKSFEIIDDNMVVEKDIFFHTMCEHHFLPFYGRAHIAYIPDGRVAGLSKLARTVEVYSKKPQIQERLNIEVADALMDYLGAKGAFVVIEAEHMCMSMRGVRKPGTATLTTVARGLFETDKDLRDQAYRLMGL.

Positions 75, 78, and 146 each coordinate Zn(2+).

Belongs to the GTP cyclohydrolase I family. In terms of assembly, homomer.

The enzyme catalyses GTP + H2O = 7,8-dihydroneopterin 3'-triphosphate + formate + H(+). Its pathway is cofactor biosynthesis; 7,8-dihydroneopterin triphosphate biosynthesis; 7,8-dihydroneopterin triphosphate from GTP: step 1/1. This Streptococcus pneumoniae (strain Taiwan19F-14) protein is GTP cyclohydrolase 1.